Here is a 251-residue protein sequence, read N- to C-terminus: Triosephosphate isomerase 1 (251 aa).

N9–K11 is a binding site for substrate. H95 functions as the Electrophile in the catalytic mechanism. E167 serves as the catalytic Proton acceptor. Residues G173, S213, and G234–G235 contribute to the substrate site.

The protein belongs to the triosephosphate isomerase family. In terms of assembly, homodimer.

The protein localises to the cytoplasm. It catalyses the reaction D-glyceraldehyde 3-phosphate = dihydroxyacetone phosphate. Its pathway is carbohydrate biosynthesis; gluconeogenesis. It participates in carbohydrate degradation; glycolysis; D-glyceraldehyde 3-phosphate from glycerone phosphate: step 1/1. Functionally, involved in the gluconeogenesis. Catalyzes stereospecifically the conversion of dihydroxyacetone phosphate (DHAP) to D-glyceraldehyde-3-phosphate (G3P). The sequence is that of Triosephosphate isomerase 1 from Listeria innocua serovar 6a (strain ATCC BAA-680 / CLIP 11262).